We begin with the raw amino-acid sequence, 186 residues long: Translation initiation factor IF-3 (186 aa).

The protein belongs to the IF-3 family. Monomer.

It localises to the cytoplasm. Functionally, IF-3 binds to the 30S ribosomal subunit and shifts the equilibrium between 70S ribosomes and their 50S and 30S subunits in favor of the free subunits, thus enhancing the availability of 30S subunits on which protein synthesis initiation begins. In Borrelia garinii subsp. bavariensis (strain ATCC BAA-2496 / DSM 23469 / PBi) (Borreliella bavariensis), this protein is Translation initiation factor IF-3.